The chain runs to 269 residues: Shikimate dehydrogenase (NADP(+)) (269 aa).

Residues S17–S19 and T64 contribute to the shikimate site. Catalysis depends on K68, which acts as the Proton acceptor. E80 is a binding site for NADP(+). The shikimate site is built by N89 and D105. NADP(+) is bound by residues G130–A134, N154–K159, and M213. Y215 provides a ligand contact to shikimate. G237 contributes to the NADP(+) binding site.

This sequence belongs to the shikimate dehydrogenase family. Homodimer.

The enzyme catalyses shikimate + NADP(+) = 3-dehydroshikimate + NADPH + H(+). It participates in metabolic intermediate biosynthesis; chorismate biosynthesis; chorismate from D-erythrose 4-phosphate and phosphoenolpyruvate: step 4/7. Involved in the biosynthesis of the chorismate, which leads to the biosynthesis of aromatic amino acids. Catalyzes the reversible NADPH linked reduction of 3-dehydroshikimate (DHSA) to yield shikimate (SA). In Neisseria cinerea, this protein is Shikimate dehydrogenase (NADP(+)).